A 148-amino-acid polypeptide reads, in one-letter code: Methylglyoxal synthase (148 aa).

Residues 4–148 (VSVPAIKRIV…LSYNTKVKKD (145 aa)) enclose the MGS-like domain. Substrate contacts are provided by residues histidine 17, lysine 21, 43–46 (TGTT), and 63–64 (SG). Aspartate 69 serves as the catalytic Proton donor/acceptor. Histidine 96 contributes to the substrate binding site.

The protein belongs to the methylglyoxal synthase family.

It catalyses the reaction dihydroxyacetone phosphate = methylglyoxal + phosphate. In terms of biological role, catalyzes the formation of methylglyoxal from dihydroxyacetone phosphate. This is Methylglyoxal synthase from Leptospira interrogans serogroup Icterohaemorrhagiae serovar copenhageni (strain Fiocruz L1-130).